We begin with the raw amino-acid sequence, 207 residues long: Ribosomal RNA small subunit methyltransferase G (207 aa).

S-adenosyl-L-methionine contacts are provided by residues Gly76, Gln81, 127-128 (VE), and Arg141.

It belongs to the methyltransferase superfamily. RNA methyltransferase RsmG family.

It is found in the cytoplasm. The enzyme catalyses guanosine(527) in 16S rRNA + S-adenosyl-L-methionine = N(7)-methylguanosine(527) in 16S rRNA + S-adenosyl-L-homocysteine. In terms of biological role, specifically methylates the N7 position of guanine in position 527 of 16S rRNA. The polypeptide is Ribosomal RNA small subunit methyltransferase G (Neisseria meningitidis serogroup C (strain 053442)).